The following is a 348-amino-acid chain: tRNA N6-adenosine threonylcarbamoyltransferase (348 aa).

Fe cation is bound by residues H111 and H115. Substrate is bound by residues 134-138 (LVSGG), D167, G180, and N276. D304 contributes to the Fe cation binding site.

The protein belongs to the KAE1 / TsaD family. Fe(2+) is required as a cofactor.

The protein resides in the cytoplasm. The catalysed reaction is L-threonylcarbamoyladenylate + adenosine(37) in tRNA = N(6)-L-threonylcarbamoyladenosine(37) in tRNA + AMP + H(+). Its function is as follows. Required for the formation of a threonylcarbamoyl group on adenosine at position 37 (t(6)A37) in tRNAs that read codons beginning with adenine. Is involved in the transfer of the threonylcarbamoyl moiety of threonylcarbamoyl-AMP (TC-AMP) to the N6 group of A37, together with TsaE and TsaB. TsaD likely plays a direct catalytic role in this reaction. The chain is tRNA N6-adenosine threonylcarbamoyltransferase from Bordetella petrii (strain ATCC BAA-461 / DSM 12804 / CCUG 43448).